The chain runs to 148 residues: Large ribosomal subunit protein bL9 (148 aa).

Belongs to the bacterial ribosomal protein bL9 family.

In terms of biological role, binds to the 23S rRNA. The chain is Large ribosomal subunit protein bL9 from Bacillus thuringiensis subsp. konkukian (strain 97-27).